The sequence spans 174 residues: Guided entry of tail-anchored proteins factor 1 (174 aa).

Residues 1–8 (MSAAEADR) lie on the Lumenal side of the membrane. Residues 9–29 (WAWLLVLSFVFGCNVLRILLP) traverse the membrane as a helical segment. At 30-99 (SFSFFMSRVL…VKARTAQLAK (70 aa)) the chain is on the cytoplasmic side. Residues 39 to 94 (LQKDAEQESQMRAEIQGMKQELSTVNMMDEFARYARLERKINKMTDKLKTHVKART) adopt a coiled-coil conformation. Residues 39-97 (LQKDAEQESQMRAEIQGMKQELSTVNMMDEFARYARLERKINKMTDKLKTHVKARTAQL) form an interaction with GET3/TRC40 region. The helical transmembrane segment at 100–120 (IKWVISVAFYILQAALMVSLI) threads the bilayer. Residues 121–148 (WKYYSVPVAVVPSKWITPLDRLVAFPTR) are Lumenal-facing. The chain crosses the membrane as a helical span at residues 149-169 (VAGGVGITCWILVCNKVVAIV). Over 170 to 174 (LHPFS) the chain is Cytoplasmic.

The protein belongs to the WRB/GET1 family. As to quaternary structure, component of the Golgi to ER traffic (GET) complex, which is composed of GET1/WRB, CAMLG/GET2 and GET3. Within the complex, GET1 and CAMLG form a heterotetramer which is stabilized by phosphatidylinositol binding and which binds to the GET3 homodimer. Interacts with CAMLG (via C-terminus). GET3 shows a higher affinity for CAMLG than for GET1.

Its subcellular location is the endoplasmic reticulum membrane. In terms of biological role, required for the post-translational delivery of tail-anchored (TA) proteins to the endoplasmic reticulum. Together with CAMLG/GET2, acts as a membrane receptor for soluble GET3/TRC40, which recognizes and selectively binds the transmembrane domain of TA proteins in the cytosol. Required to ensure correct topology and ER insertion of CAMLG. The protein is Guided entry of tail-anchored proteins factor 1 of Bos taurus (Bovine).